The chain runs to 226 residues: Exosome complex component rrp46 (226 aa).

A disordered region spans residues 205-226 (NESDGHENEKNPKEDVEMDVVA). The span at 207-219 (SDGHENEKNPKED) shows a compositional bias: basic and acidic residues.

It belongs to the RNase PH family. As to quaternary structure, component of the RNA exosome complex. Specifically part of the catalytically inactive RNA exosome core complex (Exo-9) which may associate with the catalytic subunits rrp6 and dis3 in cytoplasmic- and nuclear-specific RNA exosome complex forms. Exo-9 is formed by a hexameric base ring of RNase PH domain-containing subunits and a cap ring consisting of csl4, rrp4 and rrp40.

Its subcellular location is the cytoplasm. It localises to the nucleus. The protein resides in the nucleolus. Non-catalytic component of the RNA exosome complex which has 3'-&gt;5' exoribonuclease activity and participates in a multitude of cellular RNA processing and degradation events. In the nucleus, the RNA exosome complex is involved in proper maturation of stable RNA species such as rRNA, snRNA and snoRNA, in the elimination of RNA processing by-products and non-coding 'pervasive' transcripts, such as antisense RNA species and cryptic unstable transcripts (CUTs), and of mRNAs with processing defects, thereby limiting or excluding their export to the cytoplasm. In the cytoplasm, the RNA exosome complex is involved in general mRNA turnover and in RNA surveillance pathways, preventing translation of aberrant mRNAs. The catalytic inactive RNA exosome core complex of 9 subunits (Exo-9) is proposed to play a pivotal role in the binding and presentation of RNA for ribonucleolysis, and to serve as a scaffold for the association with catalytic subunits and accessory proteins or complexes. ski6 is part of the hexameric ring of RNase PH domain-containing subunits proposed to form a central channel which threads RNA substrates for degradation. The chain is Exosome complex component rrp46 (rrp46) from Schizosaccharomyces pombe (strain 972 / ATCC 24843) (Fission yeast).